The chain runs to 193 residues: Potassium-transporting ATPase KdpC subunit (193 aa).

The chain crosses the membrane as a helical span at residues 14-34 (ITFTFLVLCGLVYPLIVTGIA).

The protein belongs to the KdpC family. In terms of assembly, the system is composed of three essential subunits: KdpA, KdpB and KdpC.

Its subcellular location is the cell membrane. Part of the high-affinity ATP-driven potassium transport (or Kdp) system, which catalyzes the hydrolysis of ATP coupled with the electrogenic transport of potassium into the cytoplasm. This subunit acts as a catalytic chaperone that increases the ATP-binding affinity of the ATP-hydrolyzing subunit KdpB by the formation of a transient KdpB/KdpC/ATP ternary complex. This is Potassium-transporting ATPase KdpC subunit from Bacillus cereus (strain ATCC 10987 / NRS 248).